A 140-amino-acid polypeptide reads, in one-letter code: Ribosome-binding factor A (140 aa).

The tract at residues 116 to 140 (RERQERGEIPPGSDDAQNCHDDEPS) is disordered.

The protein belongs to the RbfA family. Monomer. Binds 30S ribosomal subunits, but not 50S ribosomal subunits or 70S ribosomes.

It is found in the cytoplasm. One of several proteins that assist in the late maturation steps of the functional core of the 30S ribosomal subunit. Associates with free 30S ribosomal subunits (but not with 30S subunits that are part of 70S ribosomes or polysomes). Required for efficient processing of 16S rRNA. May interact with the 5'-terminal helix region of 16S rRNA. In Synechococcus sp. (strain WH7803), this protein is Ribosome-binding factor A.